The sequence spans 151 residues: Transcriptional repressor NrdR (151 aa).

The segment at 3–34 (CPHCGNCDDKVMESRTLAQGDCIRRRRECLAC) is a zinc-finger region. An ATP-cone domain is found at 49 to 141 (FMVIKKDGRR…VYKQFSNLDE (93 aa)).

The protein belongs to the NrdR family. The cofactor is Zn(2+).

Functionally, negatively regulates transcription of bacterial ribonucleotide reductase nrd genes and operons by binding to NrdR-boxes. This chain is Transcriptional repressor NrdR, found in Treponema denticola (strain ATCC 35405 / DSM 14222 / CIP 103919 / JCM 8153 / KCTC 15104).